Reading from the N-terminus, the 190-residue chain is Membrane protein FAM174A (190 aa).

The N-terminal stretch at 1 to 29 is a signal peptide; sequence MPTRRGCSGPCHFLASAFVLLLLPALNQS. N-linked (GlcNAc...) asparagine glycans are attached at residues Asn27 and Asn83. Residues 30-123 lie on the Extracellular side of the membrane; it reads VVLPSTVPRA…NPSDKPMTQR (94 aa). The segment at 37-119 is disordered; it reads PRAVQESKPL…AVSPNPSDKP (83 aa). The chain crosses the membrane as a helical span at residues 124–144; the sequence is ALTVLVVVSAAVLVYFVVRTV. Residues 145–190 are Cytoplasmic-facing; that stretch reads RMRRRNRKTRRYGVLDTNIENMELTPLEQDDEDDDNTLFDANHPRR. The interval 168-190 is disordered; it reads LTPLEQDDEDDDNTLFDANHPRR. A compositionally biased stretch (acidic residues) spans 172–181; that stretch reads EQDDEDDDNT.

The protein belongs to the FAM174 family.

The protein resides in the membrane. The sequence is that of Membrane protein FAM174A (Fam174a) from Rattus norvegicus (Rat).